A 332-amino-acid chain; its full sequence is MLARTCLRSTRTFASAKNGAFKFAKRSASTQSSGAAAESPLRLNIAAAAATAVAAGSIAWYYHLYGFASAMTPAEEGLHATKYPWVHEQWLKTFDHQALRRGFQVYREVCASCHSLSRVPYRALVGTILTVDEAKALAEENEYDTEPNDQGEIEKRPGKLSDYLPDPYKNDEAARFANNGALPPDLSLIVKARHGGCDYIFSLLTGYPDEPPAGASVGAGLNFNPYFPGTGIAMARVLYDGLVDYEDGTPASTSQMAKDVVEFLNWAAEPEMDDRKRMGMKVLVVTSVLFALSVYVKRYKWAWLKSRKIVYDPPKSPPPATNLALPQQRAKS.

A mitochondrion-targeting transit peptide spans 1 to 70; the sequence is MLARTCLRST…YYHLYGFASA (70 aa). Topologically, residues 71-277 are mitochondrial intermembrane; the sequence is MTPAEEGLHA…AEPEMDDRKR (207 aa). Residues 97–250 enclose the Cytochrome c domain; sequence QALRRGFQVY…GLVDYEDGTP (154 aa). Residues Cys110, Cys113, and His114 each coordinate heme c. Residues 139 to 151 are compositionally biased toward acidic residues; it reads EENEYDTEPNDQG. The disordered stretch occupies residues 139–162; that stretch reads EENEYDTEPNDQGEIEKRPGKLSD. Met234 is a heme c binding site. Residues 278–296 traverse the membrane as a helical segment; it reads MGMKVLVVTSVLFALSVYV. Over 297–332 the chain is Mitochondrial matrix; that stretch reads KRYKWAWLKSRKIVYDPPKSPPPATNLALPQQRAKS.

Belongs to the cytochrome c family. As to quaternary structure, component of the ubiquinol-cytochrome c oxidoreductase (cytochrome b-c1 complex, complex III, CIII), a multisubunit enzyme composed of 10 subunits. The complex is composed of 3 respiratory subunits cytochrome b (cob), cytochrome c1 (cyt-1) and Rieske protein (fes-1), 2 core protein subunits pep and ucr-1, and 5 low-molecular weight protein subunits qcr6, qcr7, qcr8, qcr9 and probably NCU16844/qcr10. The complex exists as an obligatory dimer and forms supercomplexes (SCs) in the inner mitochondrial membrane with NADH-ubiquinone oxidoreductase (complex I, CI) and cytochrome c oxidase (complex IV, CIV), resulting in different assemblies (supercomplexes SCI(1)III(2), SCIII(2)IV(1) and SCIII(2)IV(2) as well as higher order I(x)III(y)IV(z) megacomplexes). Requires heme c as cofactor.

The protein resides in the mitochondrion inner membrane. The catalysed reaction is a quinol + 2 Fe(III)-[cytochrome c](out) = a quinone + 2 Fe(II)-[cytochrome c](out) + 2 H(+)(out). Its function is as follows. Component of the ubiquinol-cytochrome c oxidoreductase, a multisubunit transmembrane complex that is part of the mitochondrial electron transport chain which drives oxidative phosphorylation. The respiratory chain contains 3 multisubunit complexes succinate dehydrogenase (complex II, CII), ubiquinol-cytochrome c oxidoreductase (cytochrome b-c1 complex, complex III, CIII) and cytochrome c oxidase (complex IV, CIV), that cooperate to transfer electrons derived from NADH and succinate to molecular oxygen, creating an electrochemical gradient over the inner membrane that drives transmembrane transport and the ATP synthase. The cytochrome b-c1 complex catalyzes electron transfer from ubiquinol to cytochrome c, linking this redox reaction to translocation of protons across the mitochondrial inner membrane, with protons being carried across the membrane as hydrogens on the quinol. In the process called Q cycle, 2 protons are consumed from the matrix, 4 protons are released into the intermembrane space and 2 electrons are passed to cytochrome c. Cytochrome c1 is a catalytic core subunit containing a c-type heme. It transfers electrons from the [2Fe-2S] iron-sulfur cluster of the Rieske protein to cytochrome c. The sequence is that of Cytochrome c1, heme protein, mitochondrial (cyt-1) from Neurospora crassa (strain ATCC 24698 / 74-OR23-1A / CBS 708.71 / DSM 1257 / FGSC 987).